Reading from the N-terminus, the 230-residue chain is Biosynthetic peptidoglycan transglycosylase (230 aa).

Residues I10 to V30 traverse the membrane as a helical segment.

This sequence belongs to the glycosyltransferase 51 family.

It localises to the cell inner membrane. The enzyme catalyses [GlcNAc-(1-&gt;4)-Mur2Ac(oyl-L-Ala-gamma-D-Glu-L-Lys-D-Ala-D-Ala)](n)-di-trans,octa-cis-undecaprenyl diphosphate + beta-D-GlcNAc-(1-&gt;4)-Mur2Ac(oyl-L-Ala-gamma-D-Glu-L-Lys-D-Ala-D-Ala)-di-trans,octa-cis-undecaprenyl diphosphate = [GlcNAc-(1-&gt;4)-Mur2Ac(oyl-L-Ala-gamma-D-Glu-L-Lys-D-Ala-D-Ala)](n+1)-di-trans,octa-cis-undecaprenyl diphosphate + di-trans,octa-cis-undecaprenyl diphosphate + H(+). Its pathway is cell wall biogenesis; peptidoglycan biosynthesis. Peptidoglycan polymerase that catalyzes glycan chain elongation from lipid-linked precursors. The protein is Biosynthetic peptidoglycan transglycosylase of Nitrosospira multiformis (strain ATCC 25196 / NCIMB 11849 / C 71).